Here is a 650-residue protein sequence, read N- to C-terminus: Peroxisomal biogenesis factor 8 (650 aa).

Residues 648-650 (AKL) carry the Microbody targeting signal motif.

It localises to the peroxisome matrix. In terms of biological role, essential for peroxisome biogenesis. May play a role in triggering the protein import competence of individual peroxisomes. It may interact with PEX10. The chain is Peroxisomal biogenesis factor 8 (PEX8) from Pichia angusta (Yeast).